We begin with the raw amino-acid sequence, 637 residues long: Probable potassium transport system protein Kup (637 aa).

12 helical membrane passes run 25–45, 62–82, 115–135, 149–169, 180–200, 227–247, 263–283, 295–315, 352–372, 378–398, 410–430, and 434–454; these read ISLA…LYAI, VLGV…LKYL, WFLV…GMIT, IIAP…LTGL, VGAL…VLGL, LQGF…EALY, ILFV…LLLF, LVPS…TIIA, IYVP…VIGF, LAAA…ILFY, LATN…FGAS, and LFHG…LMLT.

It belongs to the HAK/KUP transporter (TC 2.A.72) family.

Its subcellular location is the cell inner membrane. The catalysed reaction is K(+)(in) + H(+)(in) = K(+)(out) + H(+)(out). Functionally, transport of potassium into the cell. Likely operates as a K(+):H(+) symporter. This chain is Probable potassium transport system protein Kup, found in Chlorobium phaeobacteroides (strain DSM 266 / SMG 266 / 2430).